Reading from the N-terminus, the 261-residue chain is Kallikrein 1-related peptidase b26 (261 aa).

The N-terminal stretch at 1 to 18 (MWFLILFPALSLGGIDAA) is a signal peptide. Positions 19 to 24 (PPLQSR) are cleaved as a propeptide — activation peptide. In terms of domain architecture, Peptidase S1 spans 25 to 258 (VVGGFNCEKN…FNSWIKDTMM (234 aa)). Cystine bridges form between C31/C173, C50/C66, C152/C219, C184/C198, and C209/C234. The Charge relay system role is filled by H65. An N-linked (GlcNAc...) asparagine glycan is attached at N102. D120 acts as the Charge relay system in catalysis. S213 functions as the Charge relay system in the catalytic mechanism.

The protein belongs to the peptidase S1 family. Kallikrein subfamily.

The catalysed reaction is Preferential cleavage of Arg-|-Xaa bonds in small molecule substrates. Highly selective action to release kallidin (lysyl-bradykinin) from kininogen involves hydrolysis of Met-|-Xaa or Leu-|-Xaa.. Its function is as follows. Glandular kallikreins cleave Met-Lys and Arg-Ser bonds in kininogen to release Lys-bradykinin. In terms of biological role, prorenin-converting enzyme cleaves mouse REN-2 prorenin at a dibasic site to yield mature renin. The polypeptide is Kallikrein 1-related peptidase b26 (Klk1b26) (Mus musculus (Mouse)).